The following is a 148-amino-acid chain: uncharacterized protein (148 aa).

Residues His122–Asp148 form a disordered region. The span at Asn123–Arg134 shows a compositional bias: basic residues.

This is an uncharacterized protein from Homo sapiens (Human).